The primary structure comprises 637 residues: 1-deoxy-D-xylulose-5-phosphate synthase (637 aa).

Thiamine diphosphate-binding positions include H73 and 113-115; that span reads SHA. Residue D144 participates in Mg(2+) binding. Thiamine diphosphate is bound by residues 145 to 146, N174, Y285, and E366; that span reads GA. Residue N174 coordinates Mg(2+).

This sequence belongs to the transketolase family. DXPS subfamily. Homodimer. Mg(2+) is required as a cofactor. It depends on thiamine diphosphate as a cofactor.

The catalysed reaction is D-glyceraldehyde 3-phosphate + pyruvate + H(+) = 1-deoxy-D-xylulose 5-phosphate + CO2. The protein operates within metabolic intermediate biosynthesis; 1-deoxy-D-xylulose 5-phosphate biosynthesis; 1-deoxy-D-xylulose 5-phosphate from D-glyceraldehyde 3-phosphate and pyruvate: step 1/1. In terms of biological role, catalyzes the acyloin condensation reaction between C atoms 2 and 3 of pyruvate and glyceraldehyde 3-phosphate to yield 1-deoxy-D-xylulose-5-phosphate (DXP). This chain is 1-deoxy-D-xylulose-5-phosphate synthase, found in Streptomyces griseus subsp. griseus (strain JCM 4626 / CBS 651.72 / NBRC 13350 / KCC S-0626 / ISP 5235).